Here is an 82-residue protein sequence, read N- to C-terminus: uncharacterized protein (82 aa).

This is an uncharacterized protein from Dictyostelium discoideum (Social amoeba).